The following is a 435-amino-acid chain: MKRRASDRGAGETSARAKALGSGISGNNAKRAGPFILGPRLGNSPVPSIVQCLARKDGTDDFYQLKILTLEERGDQGIESQEERQGKMLLHTEYSLLSLLHTQDGVVHHHGLFQDRTCEIVEDTESSRMVKKMKKRICLVLDCLCAHDFSDKTADLINLQHYVIKEKRLSERETVVIFYDVVRVVEALHQKNIVHRDLKLGNMVLNKRTHRITITNFCLGKHLVSEGDLLKDQRGSPAYISPDVLSGRPYRGKPSDMWALGVVLFTMLYGQFPFYDSIPQELFRKIKAAEYTIPEDGRVSENTVCLIRKLLVLDPQQRLAAADVLEALSAIIASWQSLSSLSGPLQVVPDIDDQMSNADSSQEAKVTEECSQYEFENYMRQQLLLAEEKSSIHDARSWVPKRQFGSAPPVRRLGHDAQPMTSLDTAILAQRYLRK.

Basic and acidic residues predominate over residues Met-1–Ala-10. The interval Met-1–Ser-25 is disordered. The Protein kinase domain maps to Phe-35–Ile-331. ATP-binding positions include Leu-41–Ile-49 and Lys-66. Arg-196 functions as the Proton acceptor in the catalytic mechanism.

This sequence belongs to the protein kinase superfamily. CAMK Ser/Thr protein kinase family. In terms of tissue distribution, strongly expressed in heart, brain, placenta, lung, skeletal muscle, kidney, spleen, thymus, prostate, liver, pancreas, testis, ovary, small intestine, colon and peripheral blood leukocytes.

Its subcellular location is the nucleus. The protein localises to the cytoplasm. It carries out the reaction L-seryl-[protein] + ATP = O-phospho-L-seryl-[protein] + ADP + H(+). The catalysed reaction is L-threonyl-[protein] + ATP = O-phospho-L-threonyl-[protein] + ADP + H(+). Its function is as follows. May be a negative regulator of NF-kappa-B and p53-mediated gene transcription. The sequence is that of Serine/threonine-protein kinase 40 (STK40) from Homo sapiens (Human).